The following is a 283-amino-acid chain: Homeobox protein BarH-like 2 (283 aa).

2 disordered regions span residues 107 to 141 (AAAA…RRSR) and 198 to 283 (KGGQ…PPLS). Over residues 122–132 (SSESETEQPTP) the composition is skewed to polar residues. The segment at residues 139 to 198 (RSRTIFTELQLMGLEKKFQKQKYLSTPDRLDLAQSLGLTQLQVKTWYQNRRMKWKKMVLK) is a DNA-binding region (homeobox). Residues 268 to 277 (QPQELSEASS) are compositionally biased toward low complexity.

The protein belongs to the BAR homeobox family. In terms of tissue distribution, nervous system, particularly in the telencephalon, spinal cord, and dorsal root ganglia.

The protein localises to the nucleus. Functionally, transcription factor. Binds optimally to the DNA consensus sequence 5'-YYTAATGRTTTTY-3'. May control the expression of neural adhesion molecules such as L1 or Ng-CAM during embryonic development of both the central and peripherical nervous system. May be involved in controlling adhesive processes in keratinizing epithelia. The chain is Homeobox protein BarH-like 2 (Barx2) from Mus musculus (Mouse).